A 234-amino-acid polypeptide reads, in one-letter code: MRLYQLSSQSLQFPDPNHALDDPNGLLAVGGDLSVARLKAAYRQGIFPWFSPGEPILWWSPNPRAVLFPDELHVSRSMKKFLKRHTFHATLNQAFDDVIHACAHEHHDGTWITSEIISAYRQLHLAGKAHSVEVWQDDKLVGGLYGVEQGRLFCGESMFSRTDNASKYALLAFQQHFIHHGGHLIDCQVLNAHTASLGVSEIPRDRFLQQLSQWQDLAVDDGCWLPQQLAEPTL.

Belongs to the L/F-transferase family.

Its subcellular location is the cytoplasm. It carries out the reaction N-terminal L-lysyl-[protein] + L-leucyl-tRNA(Leu) = N-terminal L-leucyl-L-lysyl-[protein] + tRNA(Leu) + H(+). The enzyme catalyses N-terminal L-arginyl-[protein] + L-leucyl-tRNA(Leu) = N-terminal L-leucyl-L-arginyl-[protein] + tRNA(Leu) + H(+). It catalyses the reaction L-phenylalanyl-tRNA(Phe) + an N-terminal L-alpha-aminoacyl-[protein] = an N-terminal L-phenylalanyl-L-alpha-aminoacyl-[protein] + tRNA(Phe). Functions in the N-end rule pathway of protein degradation where it conjugates Leu, Phe and, less efficiently, Met from aminoacyl-tRNAs to the N-termini of proteins containing an N-terminal arginine or lysine. In Pectobacterium carotovorum subsp. carotovorum (strain PC1), this protein is Leucyl/phenylalanyl-tRNA--protein transferase.